Here is a 625-residue protein sequence, read N- to C-terminus: Threonine--tRNA ligase (625 aa).

The interval 1–149 is editing domain; sequence MRVLLIHAKR…RNYEAKTTAR (149 aa). Catalytic regions lie at residues 197–494 and 198–494; these read NPVN…PYIP and PVNK…PYIP. The Zn(2+) site is built by Cys-291, His-342, and His-463.

It belongs to the class-II aminoacyl-tRNA synthetase family. As to quaternary structure, homodimer. Requires Zn(2+) as cofactor.

The protein resides in the cytoplasm. The catalysed reaction is tRNA(Thr) + L-threonine + ATP = L-threonyl-tRNA(Thr) + AMP + diphosphate + H(+). Functionally, catalyzes the attachment of threonine to tRNA(Thr) in a two-step reaction: L-threonine is first activated by ATP to form Thr-AMP and then transferred to the acceptor end of tRNA(Thr). Also edits incorrectly charged L-seryl-tRNA(Thr). This chain is Threonine--tRNA ligase, found in Hyperthermus butylicus (strain DSM 5456 / JCM 9403 / PLM1-5).